We begin with the raw amino-acid sequence, 287 residues long: Viomycin phosphotransferase (287 aa).

Residue Asp-190 is the Proton acceptor of the active site.

Belongs to the aminoglycoside phosphotransferase family.

The enzyme catalyses viomycin + ATP = O-phosphoviomycin + ADP + H(+). Functionally, the aminoglycoside phosphotransferases achieve inactivation of their antibiotic substrates by phosphorylation. In Streptomyces vinaceus, this protein is Viomycin phosphotransferase (vph).